Consider the following 140-residue polypeptide: Pro-Viral epidermal growth factor (140 aa).

The N-terminal stretch at methionine 1–phenylalanine 18 is a signal peptide. The Extracellular portion of the chain corresponds to alanine 19 to tyrosine 100. A glycan (N-linked (GlcNAc...) asparagine; by host) is linked at asparagine 34. The region spanning alanine 41–glutamine 81 is the EGF-like domain. Cystine bridges form between cysteine 45–cysteine 58, cysteine 53–cysteine 69, and cysteine 71–cysteine 80. An N-linked (GlcNAc...) asparagine; by host glycan is attached at asparagine 95. Residues isoleucine 101–leucine 121 traverse the membrane as a helical segment. Residues serine 122–proline 140 lie on the Cytoplasmic side of the membrane.

This sequence belongs to the orthopoxvirus OPG019 family. Viral epidermal growth factor interacts with host EGFR and promotes EGFR dimerization. Cleaved at the cell surface by host ADAM10, thereby releasing the secreted form of VGF.

The protein resides in the host membrane. Its subcellular location is the secreted. Its function is as follows. Stimulates cellular proliferation (hyperplasia)and mobility around infected cells to promote rapid and efficient spread of infection. This effect is beneficial for virus replication in vivo, because poxviruses replicate possibly better in proliferating cells than in quiescent cells. Acts by binding host EGFR, inducing its dimerization, autophosphorylation and leading to activation of several cellular pathways regulating cell proliferation or cell survival. The activation by host EGFR of mitogen activated protein kinases (MAPK) and extracellular-signal regulated kinases (ERK) are essential for the positive effect of vaccinia growth factor on poxvirus virulence in vivo. The polypeptide is Pro-Viral epidermal growth factor (OPG019) (Bos taurus (Bovine)).